Reading from the N-terminus, the 86-residue chain is DNA-directed RNA polymerase subunit Rpo11 (86 aa).

This sequence belongs to the archaeal Rpo11/eukaryotic RPB11/RPC19 RNA polymerase subunit family. In terms of assembly, part of the RNA polymerase complex.

It localises to the cytoplasm. The catalysed reaction is RNA(n) + a ribonucleoside 5'-triphosphate = RNA(n+1) + diphosphate. In terms of biological role, DNA-dependent RNA polymerase (RNAP) catalyzes the transcription of DNA into RNA using the four ribonucleoside triphosphates as substrates. This Archaeoglobus fulgidus (strain ATCC 49558 / DSM 4304 / JCM 9628 / NBRC 100126 / VC-16) protein is DNA-directed RNA polymerase subunit Rpo11.